A 299-amino-acid chain; its full sequence is Peroxisomal biogenesis factor 19 (299 aa).

The disordered stretch occupies residues 1 to 61 (MAAAEEGCGV…KRAPGDTAKD (61 aa)). N-acetylalanine is present on A2. The tract at residues 2–56 (AAAEEGCGVGVEDDRELEELLESALDDFDKAKPSPEHAPTISAPDASGPQKRAPG) is docking to the peroxisome membrane and binding to PEX3. The tract at residues 2 to 91 (AAAEEGCGVG…QATAEFEKAM (90 aa)) is necessary for PEX19 function on peroxisome biogenesis. Acidic residues predominate over residues 12-27 (VEDDRELEELLESALD). Phosphoserine is present on residues S35 and S66. T236 carries the phosphothreonine modification. A Cysteine methyl ester modification is found at C296. A lipid anchor (S-farnesyl cysteine) is attached at C296. The propeptide at 297–299 (LIM) is removed in mature form.

It belongs to the peroxin-19 family. In terms of assembly, interacts with a broad range of peroxisomal membrane proteins, including PEX3, PEX10, PEX11A, PEX11B, PEX12, PEX13, PEX14 and PEX16, PXMP2/PMP22, PXMP4/PMP24, SLC25A17/PMP34, ABCD1/ALDP, ABCD2/ALDRP, and ABCD3/PMP70. Also interacts with the tumor suppressor CDKN2A/p19ARF.

It is found in the cytoplasm. The protein localises to the peroxisome membrane. Its function is as follows. Necessary for early peroxisomal biogenesis. Acts both as a cytosolic chaperone and as an import receptor for peroxisomal membrane proteins (PMPs). Binds and stabilizes newly synthesized PMPs in the cytoplasm by interacting with their hydrophobic membrane-spanning domains, and targets them to the peroxisome membrane by binding to the integral membrane protein PEX3. Excludes CDKN2A from the nucleus and prevents its interaction with MDM2, which results in active degradation of TP53. The sequence is that of Peroxisomal biogenesis factor 19 (Pex19) from Mus musculus (Mouse).